The chain runs to 293 residues: uncharacterized protein (293 aa).

It to M.jannaschii MJ1614 and MJ0008.

This is an uncharacterized protein from Methanocaldococcus jannaschii (strain ATCC 43067 / DSM 2661 / JAL-1 / JCM 10045 / NBRC 100440) (Methanococcus jannaschii).